A 1136-amino-acid polypeptide reads, in one-letter code: Mitochondrial 3' processome subunit 3 (1136 aa).

A mitochondrion-targeting transit peptide spans 1-97 (MKKAWAQLER…RGLVCTTVGD (97 aa)).

As to quaternary structure, component of the mitochondrial 3' processome (MPsome) complex composed at least of terminal uridylyltransferase KRET1/TUT1, 3'-5' exonuclease DSS1, MPSS1, MPSS2 and MPSS3. Within the complex, interacts with KRET1.

Its subcellular location is the mitochondrion. Its function is as follows. As part of the mitochondrial 3' processome (MPsome), involved in the maturation of guided RNA (gRNA) precursors. The protein is Mitochondrial 3' processome subunit 3 of Trypanosoma brucei brucei.